The sequence spans 93 residues: Small ribosomal subunit protein uS19c (93 aa).

It belongs to the universal ribosomal protein uS19 family.

Its subcellular location is the plastid. The protein localises to the chloroplast. Functionally, protein S19 forms a complex with S13 that binds strongly to the 16S ribosomal RNA. In Brachypodium distachyon (Purple false brome), this protein is Small ribosomal subunit protein uS19c.